The following is a 205-amino-acid chain: Imidazole glycerol phosphate synthase subunit HisH (205 aa).

The Glutamine amidotransferase type-1 domain maps to 6–205 (RVGIIDHGSG…LLTRWLNQLS (200 aa)). The active-site Nucleophile is the cysteine 84. Residues histidine 185 and glutamate 187 contribute to the active site.

Heterodimer of HisH and HisF.

Its subcellular location is the cytoplasm. The enzyme catalyses 5-[(5-phospho-1-deoxy-D-ribulos-1-ylimino)methylamino]-1-(5-phospho-beta-D-ribosyl)imidazole-4-carboxamide + L-glutamine = D-erythro-1-(imidazol-4-yl)glycerol 3-phosphate + 5-amino-1-(5-phospho-beta-D-ribosyl)imidazole-4-carboxamide + L-glutamate + H(+). It carries out the reaction L-glutamine + H2O = L-glutamate + NH4(+). Its pathway is amino-acid biosynthesis; L-histidine biosynthesis; L-histidine from 5-phospho-alpha-D-ribose 1-diphosphate: step 5/9. Its function is as follows. IGPS catalyzes the conversion of PRFAR and glutamine to IGP, AICAR and glutamate. The HisH subunit catalyzes the hydrolysis of glutamine to glutamate and ammonia as part of the synthesis of IGP and AICAR. The resulting ammonia molecule is channeled to the active site of HisF. The chain is Imidazole glycerol phosphate synthase subunit HisH from Cutibacterium acnes (strain DSM 16379 / KPA171202) (Propionibacterium acnes).